A 676-amino-acid polypeptide reads, in one-letter code: Ribonuclease R (676 aa).

One can recognise an RNB domain in the interval 207 to 527; the sequence is RKDLRDLLCF…LIVHRLLFNP (321 aa). In terms of domain architecture, S1 motif spans 566 to 651; sequence NKFLQEQPKT…LTQKIVWSIA (86 aa). Residues 656 to 676 are disordered; the sequence is DKPKKIKKTPSKKKGTKKRAS. The span at 659–676 shows a compositional bias: basic residues; that stretch reads KKIKKTPSKKKGTKKRAS.

Belongs to the RNR ribonuclease family. RNase R subfamily.

It localises to the cytoplasm. It catalyses the reaction Exonucleolytic cleavage in the 3'- to 5'-direction to yield nucleoside 5'-phosphates.. In terms of biological role, 3'-5' exoribonuclease that releases 5'-nucleoside monophosphates and is involved in maturation of structured RNAs. This chain is Ribonuclease R, found in Chlamydia pneumoniae (Chlamydophila pneumoniae).